The chain runs to 341 residues: Tryptophan--tRNA ligase (341 aa).

Residues 11-13 (RPT) and 19-20 (GH) contribute to the ATP site. Residues 12 to 20 (PTGKLHIGH) carry the 'HIGH' region motif. Position 140 (Asp-140) interacts with L-tryptophan. ATP-binding positions include 152-154 (GND), Leu-194, and 202-206 (KMSKS). A 'KMSKS' region motif is present at residues 202 to 206 (KMSKS).

Belongs to the class-I aminoacyl-tRNA synthetase family. Homodimer.

The protein resides in the cytoplasm. It carries out the reaction tRNA(Trp) + L-tryptophan + ATP = L-tryptophyl-tRNA(Trp) + AMP + diphosphate + H(+). Catalyzes the attachment of tryptophan to tRNA(Trp). The protein is Tryptophan--tRNA ligase of Lactococcus lactis subsp. lactis (strain IL1403) (Streptococcus lactis).